Consider the following 332-residue polypeptide: Lipoyl synthase (332 aa).

C55, C60, C66, C81, C85, C88, and S292 together coordinate [4Fe-4S] cluster. In terms of domain architecture, Radical SAM core spans 67–281 (WEDREATFLI…SDEAERIGFL (215 aa)).

Belongs to the radical SAM superfamily. Lipoyl synthase family. [4Fe-4S] cluster serves as cofactor.

The protein resides in the cytoplasm. It catalyses the reaction [[Fe-S] cluster scaffold protein carrying a second [4Fe-4S](2+) cluster] + N(6)-octanoyl-L-lysyl-[protein] + 2 oxidized [2Fe-2S]-[ferredoxin] + 2 S-adenosyl-L-methionine + 4 H(+) = [[Fe-S] cluster scaffold protein] + N(6)-[(R)-dihydrolipoyl]-L-lysyl-[protein] + 4 Fe(3+) + 2 hydrogen sulfide + 2 5'-deoxyadenosine + 2 L-methionine + 2 reduced [2Fe-2S]-[ferredoxin]. It functions in the pathway protein modification; protein lipoylation via endogenous pathway; protein N(6)-(lipoyl)lysine from octanoyl-[acyl-carrier-protein]: step 2/2. Its function is as follows. Catalyzes the radical-mediated insertion of two sulfur atoms into the C-6 and C-8 positions of the octanoyl moiety bound to the lipoyl domains of lipoate-dependent enzymes, thereby converting the octanoylated domains into lipoylated derivatives. In Beutenbergia cavernae (strain ATCC BAA-8 / DSM 12333 / CCUG 43141 / JCM 11478 / NBRC 16432 / NCIMB 13614 / HKI 0122), this protein is Lipoyl synthase.